The following is a 287-amino-acid chain: Isopentenyl-diphosphate Delta-isomerase I (287 aa).

In terms of domain architecture, Nudix hydrolase spans 105–257 (LLHRAFSVFL…GVKLSPWFRL (153 aa)). Active-site residues include C142 and Y207.

The protein belongs to the IPP isomerase type 1 family.

The enzyme catalyses isopentenyl diphosphate = dimethylallyl diphosphate. Its pathway is isoprenoid biosynthesis; dimethylallyl diphosphate biosynthesis; dimethylallyl diphosphate from isopentenyl diphosphate: step 1/1. It participates in porphyrin-containing compound metabolism; chlorophyll biosynthesis. Functionally, catalyzes the 1,3-allylic rearrangement of the homoallylic substrate isopentenyl (IPP) to its highly electrophilic allylic isomer, dimethylallyl diphosphate (DMAPP). The polypeptide is Isopentenyl-diphosphate Delta-isomerase I (IPI1) (Clarkia breweri (Fairy fans)).